Reading from the N-terminus, the 211-residue chain is Methylthioribulose-1-phosphate dehydratase (211 aa).

Zn(2+) is bound by residues H105 and H107.

Belongs to the aldolase class II family. MtnB subfamily. Requires Zn(2+) as cofactor.

It carries out the reaction 5-(methylsulfanyl)-D-ribulose 1-phosphate = 5-methylsulfanyl-2,3-dioxopentyl phosphate + H2O. It participates in amino-acid biosynthesis; L-methionine biosynthesis via salvage pathway; L-methionine from S-methyl-5-thio-alpha-D-ribose 1-phosphate: step 2/6. In terms of biological role, catalyzes the dehydration of methylthioribulose-1-phosphate (MTRu-1-P) into 2,3-diketo-5-methylthiopentyl-1-phosphate (DK-MTP-1-P). This Acidiphilium cryptum (strain JF-5) protein is Methylthioribulose-1-phosphate dehydratase.